The following is a 357-amino-acid chain: Probable GTP 3',8-cyclase (357 aa).

The 230-residue stretch at 5–234 folds into the Radical SAM core domain; it reads DFGRDVSGVR…DRRRYWVSSR (230 aa). Residue R14 coordinates GTP. [4Fe-4S] cluster is bound by residues C21 and C25. Y27 serves as a coordination point for S-adenosyl-L-methionine. Position 28 (C28) interacts with [4Fe-4S] cluster. K68 contacts GTP. An S-adenosyl-L-methionine-binding site is contributed by G72. T96 contributes to the GTP binding site. S120 is an S-adenosyl-L-methionine binding site. Residue K157 coordinates GTP. Residues 232–256 are disordered; that stretch reads SSRDAGSTADDAAQSVTPDGGAHPD. 2 residues coordinate [4Fe-4S] cluster: C272 and C275. 277–279 is a GTP binding site; sequence RVR. Residue C289 coordinates [4Fe-4S] cluster.

Belongs to the radical SAM superfamily. MoaA family. The cofactor is [4Fe-4S] cluster.

It carries out the reaction GTP + AH2 + S-adenosyl-L-methionine = (8S)-3',8-cyclo-7,8-dihydroguanosine 5'-triphosphate + 5'-deoxyadenosine + L-methionine + A + H(+). It participates in cofactor biosynthesis; molybdopterin biosynthesis. Functionally, catalyzes the cyclization of GTP to (8S)-3',8-cyclo-7,8-dihydroguanosine 5'-triphosphate. The polypeptide is Probable GTP 3',8-cyclase (Halobacterium salinarum (strain ATCC 29341 / DSM 671 / R1)).